The primary structure comprises 643 residues: Protein tramtrack, beta isoform (643 aa).

Positions 33–98 (TDVTLAVEGQ…MYRGEVSVDQ (66 aa)) constitute a BTB domain. Disordered regions lie at residues 118–148 (EVND…PQLQ) and 171–300 (ANAG…GLDT). Residue K123 forms a Glycyl lysine isopeptide (Lys-Gly) (interchain with G-Cter in ubiquitin) linkage. Positions 125–145 (SPAAAAAGAGATGSESTATTP) are enriched in low complexity. Positions 176-187 (TPTLPVQPSLLS) are enriched in polar residues. Positions 192-201 (PKRKRGRPRK) are enriched in basic residues. Residue K201 forms a Glycyl lysine isopeptide (Lys-Gly) (interchain with G-Cter in ubiquitin) linkage. Residues 254 to 285 (HTDDLNESRDSLPSKRSKNSKDHRVVSHHEDN) show a composition bias toward basic and acidic residues. Residues K355, K397, K418, K457, K478, and K480 each participate in a glycyl lysine isopeptide (Lys-Gly) (interchain with G-Cter in ubiquitin) cross-link. 2 consecutive C2H2-type zinc fingers follow at residues 508-531 (YRCK…VTSH) and 538-561 (YPCP…KIIH). K545 participates in a covalent cross-link: Glycyl lysine isopeptide (Lys-Gly) (interchain with G-Cter in ubiquitin). The tract at residues 584–643 (GVSGASTPPPPDLSGQNSNQSLPATSNALSTSSSSSTSSSSGSLGPLTTSAPPAPAAAAQ) is disordered. Residues 604-643 (SLPATSNALSTSSSSSTSSSSGSLGPLTTSAPPAPAAAAQ) show a composition bias toward low complexity.

In terms of assembly, can form homodimers. Interacts with Trl in vivo via the BTB domain. Interacts with phyl. Interacts with Usp47. Polyubiquitinated by sina. Polyubiquitin linkage is mainly through 'Lys-48', but linkage through 'Lys-63' also occurs. Deubiquitination by Usp47 leads to its stabilization.

The protein resides in the nucleus. Functionally, binds to a number of sites in the transcriptional regulatory region of ftz. Isoform beta is required to repress inappropriate segmentation gene transcription and repress genes incompatible with development of photoreceptor cell fates. Probable repressor of the transcription of the segmentation genes ftz, eve, h, odd, run, and en. Inhibits Trl-dependent activation of eve. May bind to the region AGGGC/TGG. Degradation of ttk is directed by binding of sinah or sina, via the adapter molecule phyl which binds to the BTB domain of ttk. A second method of degradation exists that is phyl-independent, this is mediated by recognition of motifs in the C-terminus of ttk. The polypeptide is Protein tramtrack, beta isoform (ttk) (Drosophila melanogaster (Fruit fly)).